Here is a 290-residue protein sequence, read N- to C-terminus: 33 kDa chaperonin (290 aa).

2 disulfides stabilise this stretch: Cys235/Cys237 and Cys268/Cys271.

This sequence belongs to the HSP33 family. In terms of processing, under oxidizing conditions two disulfide bonds are formed involving the reactive cysteines. Under reducing conditions zinc is bound to the reactive cysteines and the protein is inactive.

Its subcellular location is the cytoplasm. Functionally, redox regulated molecular chaperone. Protects both thermally unfolding and oxidatively damaged proteins from irreversible aggregation. Plays an important role in the bacterial defense system toward oxidative stress. The chain is 33 kDa chaperonin from Streptococcus equi subsp. zooepidemicus (strain MGCS10565).